The primary structure comprises 282 residues: Phenylethanolamine N-methyltransferase (282 aa).

Phosphoserine is present on S7. S-adenosyl-L-methionine-binding positions include Y35, Y40, 79–80 (GS), Y85, D101, N106, 158–159 (DV), and A181. Octopamine-binding residues include E219 and D267.

It carries out the reaction phenylethanolamine + S-adenosyl-L-methionine = N-methylphenylethanolamine + S-adenosyl-L-homocysteine + H(+). The enzyme catalyses (R)-noradrenaline + S-adenosyl-L-methionine = (R)-adrenaline + S-adenosyl-L-homocysteine + H(+). It catalyses the reaction (R)-normetanephrine + S-adenosyl-L-methionine = (R)-metanephrine + S-adenosyl-L-homocysteine + H(+). The catalysed reaction is (R)-octopamine + S-adenosyl-L-methionine = (R)-synephrine + S-adenosyl-L-homocysteine + H(+). It participates in catecholamine biosynthesis; (R)-adrenaline biosynthesis; (R)-adrenaline from (R)-noradrenaline: step 1/1. With respect to regulation, inhibited by methyl methanethiosulfonate, phenylglyoxal, tetranitromethane and diethyl pyrocarbonate. Inhibited by 4-oxo-1,4-dihydro-quinoline-3,7-dicarboxylic acid, 4-(benzo[d][1,3]dioxol-5-ylamino)-4-oxobutanoic acid and 1,4-diaminonaphthalene-2,6-disulfonic acid. Its function is as follows. Catalyzes the transmethylation of nonepinephrine (noradrenaline) to form epinephrine (adrenaline), using S-adenosyl-L-methionine as the methyl donor. Other substrates include phenylethanolamine and octopamine. Also methylates normetanephrine. The protein is Phenylethanolamine N-methyltransferase (PNMT) of Homo sapiens (Human).